We begin with the raw amino-acid sequence, 521 residues long: Spermidine transporter DUR31 (521 aa).

The helical transmembrane segment at 11–31 threads the bilayer; the sequence is AIIYLSYAFMLATGLFLAWKF. N-linked (GlcNAc...) asparagine glycosylation is present at N41. 12 helical membrane passes run 47-67, 79-99, 117-137, 156-176, 187-207, 227-247, 264-284, 310-330, 354-374, 377-397, 406-426, and 453-473; these read IPLA…TTYA, LVYT…GPVI, FGMV…FLFM, ALGA…FGGF, GVCV…YIEI, LVYI…GFWL, IAAF…FLAV, WLVA…FDSL, IMLI…ADNI, IYLI…LGLA, GFDV…FGTV, and FGAF…SAAL.

The protein belongs to the sodium:solute symporter (SSF) (TC 2.A.21) family.

Its subcellular location is the membrane. It catalyses the reaction spermidine(in) = spermidine(out). Spermidine transporter that is also used by salivary gland-secreted histatin 5 (Hst 5) to enter into candidal cells. A major component of host nonimmune defense systems is salivary histatins, a family of small (3-4 kDa), histidine-rich, cationic proteins secreted by major salivary glands in humans and higher primates. Hst 5 is the most potent of the 12 histatin family members and has fungicidal activity against blastoconidial and filamentous forms of Candida albicans. DUR31 only functions under high concentrations of Hst 5. Hst 5 cojugates to spermidine to be uptaken by DUR31. The protein is Spermidine transporter DUR31 of Candida albicans (strain SC5314 / ATCC MYA-2876) (Yeast).